The sequence spans 415 residues: MTEKLQPLRGIKDLLPDDYKVHDYIISKARDVGVLYGYKQMSTPILEYTKVFNRSMGESSDVISKEIYSFLDKSNESVALRPEFTAGIIRSFISNGLQHKLPLKLFSTGPVFRYDRPQAGRQRQFHQLNYEYIGAKGAITDAETLKLAIDILKALAIEQDTLLELNSLGCSESRSAYKQKLVEYLSDFKDQLSEESKIRMIKNPMRILDSKSEIDQKIVAYAPILSEYYTDESKEYFDELIKYLDILGVKYSINPRLVRGLDYYCHTAFEFTTNKLGSQSTILAGGRYDGLSRIMGNNDDVPAIGFAAGIERIALMREYDISEVKPVFVLPIGDNNITYALEIVDKLRAQNIATIVEPLGKIAKRMQRVLNENAKFIIFIGDEEQENNSIKLKDLEKQEEYIVDFAKAFELLKKY.

It belongs to the class-II aminoacyl-tRNA synthetase family. Homodimer.

It localises to the cytoplasm. The enzyme catalyses tRNA(His) + L-histidine + ATP = L-histidyl-tRNA(His) + AMP + diphosphate + H(+). The sequence is that of Histidine--tRNA ligase from Rickettsia akari (strain Hartford).